The chain runs to 1296 residues: Phosphoribosylformylglycinamidine synthase (1296 aa).

The disordered stretch occupies residues 304–323; that stretch reads WPGAATGSGGEIRDEGATGR. Residues 306-317 and Ala-677 each bind ATP; that span reads GAATGSGGEIRD. Mg(2+) contacts are provided by Asp-678, Glu-717, Asn-721, and Asp-885. Ser-887 contacts ATP. Residues 1000-1013 are compositionally biased toward basic and acidic residues; sequence PDCADQEHQAKQDE. The tract at residues 1000–1019 is disordered; it reads PDCADQEHQAKQDESDPGLN. One can recognise a Glutamine amidotransferase type-1 domain in the interval 1043–1296; sequence VAVLREQGVN…MFRNARKQLG (254 aa). The active-site Nucleophile is the Cys-1136. Catalysis depends on residues His-1261 and Glu-1263.

It in the N-terminal section; belongs to the FGAMS family. Monomer.

Its subcellular location is the cytoplasm. It carries out the reaction N(2)-formyl-N(1)-(5-phospho-beta-D-ribosyl)glycinamide + L-glutamine + ATP + H2O = 2-formamido-N(1)-(5-O-phospho-beta-D-ribosyl)acetamidine + L-glutamate + ADP + phosphate + H(+). It participates in purine metabolism; IMP biosynthesis via de novo pathway; 5-amino-1-(5-phospho-D-ribosyl)imidazole from N(2)-formyl-N(1)-(5-phospho-D-ribosyl)glycinamide: step 1/2. Phosphoribosylformylglycinamidine synthase involved in the purines biosynthetic pathway. Catalyzes the ATP-dependent conversion of formylglycinamide ribonucleotide (FGAR) and glutamine to yield formylglycinamidine ribonucleotide (FGAM) and glutamate. This chain is Phosphoribosylformylglycinamidine synthase, found in Yersinia pestis bv. Antiqua (strain Antiqua).